A 158-amino-acid polypeptide reads, in one-letter code: Mitotic-spindle organizing protein 2A (158 aa).

Residue Ser-34 is modified to Phosphoserine. The disordered stretch occupies residues 84 to 158 (RLASEPQDPA…PGKSPTQGST (75 aa)). Residues 112 to 122 (SAALGGVLALA) show a composition bias toward low complexity. A compositionally biased stretch (polar residues) spans 128–140 (EGSSQRMPRQPSA). Phosphoserine is present on Ser-152.

Belongs to the MOZART2 family. As to quaternary structure, associates with the gamma-tubulin ring complex (gTuRC) consisting of TUBGCP2, TUBGCP3, TUBGCP4, TUBGCP5 and TUBGCP6 and gamma-tubulin TUBG1 or TUBG2; within the complex, interacts with TUBGCP2; the interaction plays a role in gTuRC activation.

The protein localises to the cytoplasm. It is found in the cytoskeleton. Its subcellular location is the microtubule organizing center. The protein resides in the centrosome. It localises to the spindle. Functionally, required for the recruitment and the assembly of the gamma-tubulin ring complex (gTuRC) at the centrosome. The gTuRC regulates the minus-end nucleation of alpha-beta tubulin heterodimers that grow into microtubule protafilaments, a critical step in centrosome duplication and spindle formation. The protein is Mitotic-spindle organizing protein 2A (MZT2A) of Homo sapiens (Human).